We begin with the raw amino-acid sequence, 665 residues long: MREGTPRVRIEVNKGSNRPSQFVSESEEQRLQRVQSRDSDTATMNFVTDDRMMEEHDEYSAFKEAYEEEESREYVIENGVKRLVNQHYDSRGYSSAGRGQKGRREEERRRNMAVDYSSQDFRQSLAAIDQASRDGAISRGEDGVRVRQIGDTTIMTEHRDPYSFYWQLDQARREAESPPRRPPPTDYVIDEEEEVLETVYSPEADDVMFENQYRRPVRHPLPPPPPIMEEEPKDLPPGWEKHEDPQGYSYYWHVDSGTIQRQPPPPVNRETQADAPPPQIIQLPPQQPVIEEHAFKQTTTKRRIEQDEMSEREIEDVAMIENGDTYHKPVRFAVRSLGWTDISEDELTAEKSSRAVNRAIVDLTTRSDIDSIPKWGDGRELIMELDDNELALLDPDSMNVIHSERIQAIRVWGVGRDNGRDFAYVSRDRGTRRFMCHVFRCDTSAKTIANTLRDICKRLMLHRRPSSLHAIESGEKRIVRSEGLTAPIDEPRKVIRCHFLGVTQVPKATGIEILNEAVDRLVSQVRSERWILADVSIAPSTIAIVEVNGQQIAECRVRYLSFLGIGRDVKHCAFIMQTSSESFMCYVFHVEPNAAAMAKMVEAACKLRYQKVLDAHSSSRHHSGMSIHGQHPPSTYHGKGWTETFRDAFGSVTSRMVPSRSAQRL.

The segment covering 1-12 has biased composition (basic and acidic residues); that stretch reads MREGTPRVRIEV. Disordered stretches follow at residues 1–43 and 90–111; these read MREG…DTAT and SRGY…RRRN. Polar residues predominate over residues 14-24; the sequence is KGSNRPSQFVS. Composition is skewed to basic and acidic residues over residues 27 to 40 and 102 to 111; these read EEQR…RDSD and GRREEERRRN. The 34-residue stretch at 233–266 folds into the WW domain; sequence KDLPPGWEKHEDPQGYSYYWHVDSGTIQRQPPPP. 2 consecutive PID domains span residues 330–456 and 499–615; these read VRFA…RDIC and FLGV…VLDA.

Interacts (via PID 2 domain) with apl-1 (via cytoplasmic domain). Post-translationally, phosphorylated. As to expression, expressed in the pharynx (including pharyngeal muscle and nerve cells), ventral nerve cord and tail neurons.

It localises to the cytoplasm. The protein resides in the cytoskeleton. Modulates pharyngeal pumping activity, at least in part by regulating expression of the acetylcholinesterase genes ace-1 and ace-2. This is Protein Fe65 homolog from Caenorhabditis elegans.